Consider the following 234-residue polypeptide: MAQLDTQKIISTIANSKKTTPVKVYLKGKLSELHFPKSVHAFIGKHTGTVIGDWAEIKPILKKAKLDDYYVETAGRNTGVPLLDIKAANARIEPGAIIRDQVLIGDNAVIMMGAIINIGAEIGAGTMIDMGAVLGGRAIVGKHCHIGAGTVLAGVVEPRSAKPVTIGDHVMIGANAVVLEGTTVGEGAVIAAGAVVINDVPAHTVVAGVPAKVIKQVNDQTEAKTVLLDELRKL.

The protein belongs to the transferase hexapeptide repeat family. DapH subfamily.

It catalyses the reaction (S)-2,3,4,5-tetrahydrodipicolinate + acetyl-CoA + H2O = L-2-acetamido-6-oxoheptanedioate + CoA. It functions in the pathway amino-acid biosynthesis; L-lysine biosynthesis via DAP pathway; LL-2,6-diaminopimelate from (S)-tetrahydrodipicolinate (acetylase route): step 1/3. Catalyzes the transfer of an acetyl group from acetyl-CoA to tetrahydrodipicolinate. The chain is 2,3,4,5-tetrahydropyridine-2,6-dicarboxylate N-acetyltransferase from Lacticaseibacillus paracasei (strain ATCC 334 / BCRC 17002 / CCUG 31169 / CIP 107868 / KCTC 3260 / NRRL B-441) (Lactobacillus paracasei).